A 335-amino-acid chain; its full sequence is Holliday junction branch migration complex subunit RuvB (335 aa).

The interval 1–181 (MERIVEVEKF…FGMHFRLQFY (181 aa)) is large ATPase domain (RuvB-L). ATP-binding positions include leucine 20, arginine 21, glycine 62, lysine 65, threonine 66, threonine 67, 128–130 (EDF), arginine 171, tyrosine 181, and arginine 218. Threonine 66 is a Mg(2+) binding site. A small ATPAse domain (RuvB-S) region spans residues 182-252 (TPQELAQIIT…RTQKALEALG (71 aa)). Positions 255–335 (ERGFDELDLK…LTPNIQNSLF (81 aa)) are head domain (RuvB-H). The DNA site is built by arginine 309 and arginine 314.

It belongs to the RuvB family. As to quaternary structure, homohexamer. Forms an RuvA(8)-RuvB(12)-Holliday junction (HJ) complex. HJ DNA is sandwiched between 2 RuvA tetramers; dsDNA enters through RuvA and exits via RuvB. An RuvB hexamer assembles on each DNA strand where it exits the tetramer. Each RuvB hexamer is contacted by two RuvA subunits (via domain III) on 2 adjacent RuvB subunits; this complex drives branch migration. In the full resolvosome a probable DNA-RuvA(4)-RuvB(12)-RuvC(2) complex forms which resolves the HJ.

The protein localises to the cytoplasm. The catalysed reaction is ATP + H2O = ADP + phosphate + H(+). In terms of biological role, the RuvA-RuvB-RuvC complex processes Holliday junction (HJ) DNA during genetic recombination and DNA repair, while the RuvA-RuvB complex plays an important role in the rescue of blocked DNA replication forks via replication fork reversal (RFR). RuvA specifically binds to HJ cruciform DNA, conferring on it an open structure. The RuvB hexamer acts as an ATP-dependent pump, pulling dsDNA into and through the RuvAB complex. RuvB forms 2 homohexamers on either side of HJ DNA bound by 1 or 2 RuvA tetramers; 4 subunits per hexamer contact DNA at a time. Coordinated motions by a converter formed by DNA-disengaged RuvB subunits stimulates ATP hydrolysis and nucleotide exchange. Immobilization of the converter enables RuvB to convert the ATP-contained energy into a lever motion, pulling 2 nucleotides of DNA out of the RuvA tetramer per ATP hydrolyzed, thus driving DNA branch migration. The RuvB motors rotate together with the DNA substrate, which together with the progressing nucleotide cycle form the mechanistic basis for DNA recombination by continuous HJ branch migration. Branch migration allows RuvC to scan DNA until it finds its consensus sequence, where it cleaves and resolves cruciform DNA. The sequence is that of Holliday junction branch migration complex subunit RuvB from Nitratiruptor sp. (strain SB155-2).